We begin with the raw amino-acid sequence, 238 residues long: Uracil-DNA glycosylase (238 aa).

The active-site Proton acceptor is the Asp81.

It belongs to the uracil-DNA glycosylase (UDG) superfamily. UNG family.

It is found in the cytoplasm. The enzyme catalyses Hydrolyzes single-stranded DNA or mismatched double-stranded DNA and polynucleotides, releasing free uracil.. Excises uracil residues from the DNA which can arise as a result of misincorporation of dUMP residues by DNA polymerase or due to deamination of cytosine. This Corynebacterium efficiens (strain DSM 44549 / YS-314 / AJ 12310 / JCM 11189 / NBRC 100395) protein is Uracil-DNA glycosylase.